The sequence spans 496 residues: T-cell activation inhibitor, mitochondrial (496 aa).

The stretch at 404–437 forms a coiled coil; sequence KAQQARENMKRKEELKVIENELIQASTKKFSLEK.

The protein localises to the mitochondrion. In terms of biological role, may regulate T-cell apoptosis. The sequence is that of T-cell activation inhibitor, mitochondrial (TCAIM) from Homo sapiens (Human).